The primary structure comprises 101 residues: Small ribosomal subunit protein bS18c (101 aa).

Belongs to the bacterial ribosomal protein bS18 family. In terms of assembly, part of the 30S ribosomal subunit.

It localises to the plastid. Its subcellular location is the chloroplast. The chain is Small ribosomal subunit protein bS18c from Aethionema grandiflorum (Persian stone-cress).